Consider the following 506-residue polypeptide: Transcription factor CP2 (506 aa).

In terms of domain architecture, Grh/CP2 DB spans 61–300; the sequence is ENKILPFQYV…SPGFNSSHNS (240 aa). Positions 133–395 are DNA-binding; that stretch reads EHQQLEGWRW…LFNALKGRIV (263 aa). Disordered stretches follow at residues 238 to 268 and 291 to 316; these read FKPK…YQPS and SPGF…QPEP. The segment covering 241–265 has biased composition (basic and acidic residues); that stretch reads KGADRKQKTDREKMEKRTPQEKEKY. Over residues 291–300 the composition is skewed to polar residues; sequence SPGFNSSHNS.

It belongs to the grh/CP2 family. CP2 subfamily. In terms of assembly, component of the SSP (stage selector protein) complex, which appears to be a heteromer of TFCP2 and 2 copies of NFE4.

Its subcellular location is the nucleus. May function as a transcription factor. The protein is Transcription factor CP2 (tfcp2) of Xenopus laevis (African clawed frog).